The sequence spans 144 residues: Large ribosomal subunit protein uL16 (144 aa).

This sequence belongs to the universal ribosomal protein uL16 family. In terms of assembly, part of the 50S ribosomal subunit.

In terms of biological role, binds 23S rRNA and is also seen to make contacts with the A and possibly P site tRNAs. This is Large ribosomal subunit protein uL16 from Bacillus cytotoxicus (strain DSM 22905 / CIP 110041 / 391-98 / NVH 391-98).